A 265-amino-acid chain; its full sequence is Glutamate racemase (265 aa).

Residues 9 to 10 (DS) and 41 to 42 (YG) each bind substrate. Cys72 (proton donor/acceptor) is an active-site residue. 73–74 (NT) serves as a coordination point for substrate. The active-site Proton donor/acceptor is Cys183. 184–185 (TH) contacts substrate.

The protein belongs to the aspartate/glutamate racemases family.

It carries out the reaction L-glutamate = D-glutamate. It functions in the pathway cell wall biogenesis; peptidoglycan biosynthesis. Its function is as follows. Provides the (R)-glutamate required for cell wall biosynthesis. In Lysinibacillus sphaericus (Bacillus sphaericus), this protein is Glutamate racemase.